Reading from the N-terminus, the 600-residue chain is Mitoguardin 1 (600 aa).

The next 2 helical transmembrane spans lie at 15–32 (TYAV…YSLS) and 38–58 (PVAK…IFLA). Phosphoserine occurs at positions 257 and 261.

Belongs to the mitoguardin family. As to quaternary structure, homodimer and heterodimer; forms heterodimers with MIGA2. Interacts with PLD6/MitoPLD.

It is found in the mitochondrion outer membrane. Functionally, regulator of mitochondrial fusion. Acts by forming homo- and heterodimers at the mitochondrial outer membrane and facilitating the formation of PLD6/MitoPLD dimers. May act by regulating phospholipid metabolism via PLD6/MitoPLD. The chain is Mitoguardin 1 from Mus musculus (Mouse).